A 989-amino-acid polypeptide reads, in one-letter code: MKVVNLKQAILQAWKERWSDYQWAINIKKNCPKGATWDYLNLAEALLEQAMIGPSPNPLILSYLKYAISSQMVSYSSVLTAISKFDDFSRELCVKSLLEIMDMFSNRLSCHGKAEECIGLCRAMLCTVVWLLQGCAWYCERLRDPNDFSALESSLRACLERMANLLHSTKNRALVHIARLEEQASWTNVEQAVLKLTENLSAVTNPTLKESLEECVSLVKSIPQMLCLQCDPPVHTTFPSVHAFIMLEGTMNLTGETQPLVEQLMMIKRMQRIPAPLFVLEIWKACFTGLIESPEGNEELKWTAFTFLKIPQVLLRLKKYPQGEKTQDFTEDVNVAFEYLLNLTPLLDKADQRCNCDCLSLLLQECNKLGLLSEANTATLTAKRSEDREHAPRLKTAENANIQPNPGLILRAEPTVTNILKTVDADHSKSPEGLLGVLGHMLSGKSLDLLLAAAAATGKLKSFARKFIKLNEFPKHISGEGSKSASVRALLFDISFLMLCHVVQTYGSEVILSDPSPSSETPFFETWLQTCMPEEGKTLNPDHPCFRPESGKVESLVALLNSSSEMKLVQMKWHEICLSTPAAILEVLNAWENGVLSVEAVQKITDNIKGKVCSMAICAVAWLVAHVRMLGLDEREKPQTMIRQLMTPMSGENTLQFYHERVVIMSSILEHMCADVFQQTGLSLRPAVEGQEPIPYRNLLPARLPIRQALQSQFRKVLEKGWVDSHAFHLFENLLHMGGVFWFTNNLVKELLKETRKEWASRVVELLYSIFCLDTQQITLTLLGHILPRLLTDPAHWHSLADPPGRALAKLSVWCALSSYSSHHKGQASARQRKRHREDIEDYTSLFPLDDTQPSKLMRLLSSNEDENSMLSSPGDRSISSSLSASQLHTVNMRDPLNRVLANLFLLISSQLGSKTAGPHTQFVQSFVEECVDCSEQGSRSSILQFMPFTMISELVKLQSLAKPKTVLSITDLSLPLGRRMAAKAIAAL.

6 short sequence motifs (LXXLL motif) span residues Leu343–Leu347, Leu359–Leu363, Leu447–Leu451, Leu556–Leu560, Leu787–Leu791, and Leu857–Leu861.

This sequence belongs to the Mediator complex subunit 24 family. As to quaternary structure, component of the Mediator complex.

The protein localises to the nucleus. Functionally, component of the Mediator complex, a coactivator involved in the regulated transcription of nearly all RNA polymerase II-dependent genes. Mediator functions as a bridge to convey information from gene-specific regulatory proteins to the basal RNA polymerase II transcription machinery. Mediator is recruited to promoters by direct interactions with regulatory proteins and serves as a scaffold for the assembly of a functional preinitiation complex with RNA polymerase II and the general transcription factors. Required for proliferation of enteric nervous system precursors. Required for the development of dopaminergic amacrine cells and rod photoreceptor cells in the retina. This is Mediator of RNA polymerase II transcription subunit 24 (med24) from Danio rerio (Zebrafish).